We begin with the raw amino-acid sequence, 83 residues long: Protein midgut expression 1 (83 aa).

As to expression, endoderm-specific pattern of expression during embryogenesis; anterior and posterior midgut primordia.

Its function is as follows. Involved in morphogenesis and development. The chain is Protein midgut expression 1 (mex1) from Drosophila melanogaster (Fruit fly).